Consider the following 182-residue polypeptide: Dual-action ribosomal maturation protein DarP (182 aa).

The tract at residues 1-20 (MNKQPEEWQDPQSLQQQDDE) is disordered.

This sequence belongs to the DarP family.

Its subcellular location is the cytoplasm. Functionally, member of a network of 50S ribosomal subunit biogenesis factors which assembles along the 30S-50S interface, preventing incorrect 23S rRNA structures from forming. Promotes peptidyl transferase center (PTC) maturation. The protein is Dual-action ribosomal maturation protein DarP of Sodalis glossinidius (strain morsitans).